A 1147-amino-acid polypeptide reads, in one-letter code: ATP-dependent helicase/deoxyribonuclease subunit B (1147 aa).

Position 8-15 (8-15) interacts with ATP; sequence GRAGSGKS. Positions 786, 1106, 1109, and 1115 each coordinate [4Fe-4S] cluster.

Belongs to the helicase family. AddB/RexB type 1 subfamily. Heterodimer of AddA and AddB. The cofactor is Mg(2+). It depends on [4Fe-4S] cluster as a cofactor.

Its function is as follows. The heterodimer acts as both an ATP-dependent DNA helicase and an ATP-dependent, dual-direction single-stranded exonuclease. Recognizes the chi site generating a DNA molecule suitable for the initiation of homologous recombination. The AddB subunit has 5' -&gt; 3' nuclease activity but not helicase activity. This Clostridium botulinum (strain Loch Maree / Type A3) protein is ATP-dependent helicase/deoxyribonuclease subunit B.